A 56-amino-acid polypeptide reads, in one-letter code: Lantibiotic subtilin (56 aa).

Residues 1-24 constitute a propeptide that is removed on maturation; the sequence is MSKFDDFDLDVVKVSKQDSKITPQ. At Trp-25 the chain carries N2-succinyltryptophan; partial. Positions 27–31 form a cross-link, lanthionine (Ser-Cys); the sequence is SESLC. 2,3-didehydroalanine (Ser) is present on Ser-29. Cross-links (beta-methyllanthionine (Thr-Cys)) lie at residues 32–35, 37–43, 47–50, and 49–52; these read TPGC, TGALQTC, TLTC, and TCNC. At Thr-42 the chain carries (Z)-2,3-didehydrobutyrine. Ser-55 carries the post-translational modification 2,3-didehydroalanine (Ser).

This sequence belongs to the type A lantibiotic family. In terms of processing, maturation of lantibiotics involves the enzymatic conversion of Thr, and Ser into dehydrated AA and the formation of thioether bonds with cysteine. This is followed by membrane translocation and cleavage of the modified precursor. Post-translationally, succinylated subtilin is 10-20 times less active than subtilin. The ratio subtilin/succinylated subtilin is about 1:2 after 24 hours growth. The 2,3-didehydrobutyrine is determined to be the Z-isomer.

In terms of biological role, lanthionine-containing peptide antibiotic (lantibiotic) active on Gram-positive bacteria. The bactericidal activity of lantibiotics is based on depolarization of energized bacterial cytoplasmic membranes, initiated by the formation of aqueous transmembrane pores. The sequence is that of Lantibiotic subtilin (spaS) from Bacillus subtilis.